The primary structure comprises 253 residues: Probable transcriptional regulatory protein KRH_13670 (253 aa).

This sequence belongs to the TACO1 family.

It localises to the cytoplasm. This chain is Probable transcriptional regulatory protein KRH_13670, found in Kocuria rhizophila (strain ATCC 9341 / DSM 348 / NBRC 103217 / DC2201).